Here is a 525-residue protein sequence, read N- to C-terminus: Neutrophil cytosol factor 2 (525 aa).

TPR repeat units follow at residues 37–70 (SRICFNIGCVNTILENLQAAEQAFTKSINRDKHS), 71–104 (AVAYFQRGMLYYRMEKYDLAIKDLKEALTQLRGN), and 121–154 (CEVLYNIALMHAKKEEWKKAEEQLALATNMKSEP). Thr233 is modified (phosphothreonine). Residues 240-299 (LEGEAHRVLFGFVPETPEELQVMPGNIVFVLKKGSDNWATVMFNGQKGLVPCNYLEPVEL) form the SH3 1 domain. Positions 304-343 (QSQPQEDTSPESDIPPPPNSSPPGRLQLSPGHKQKEPKEL) are disordered. 2 positions are modified to phosphoserine: Ser324 and Ser398. The region spanning 350-428 (PYMLKVHYKY…YCLTLWCEHT (79 aa)) is the PB1 domain. A disordered region spans residues 437-457 (EPIQRENSDASKQTTEPQPKE). One can recognise an SH3 2 domain in the interval 456–515 (KEGTQVVAIFSYEAAQPEDLEFVEGDVILVLSHVNEEWLEGECKGKVGIFPKAFVEGCAA).

Belongs to the NCF2/NOXA1 family. As to quaternary structure, component of the phagocyte NADPH oxidase complex composed of an obligatory core heterodimer formed by the membrane proteins CYBA and CYBB and the cytosolic regulatory subunits NCF1/p47-phox, NCF2/p67-phox, NCF4/p40-phox and the small GTPase RAC1 or RAC2. Part of a cytosolic complex composed at least by NCF1, NCF2 and NCF4. Interacts with NCF4. Interacts (via the C-terminal SH3 domain) with NCF1 (via C-terminus). Interacts with SYTL1 and RAC1. May interact with NOXO1. Interacts with S100A8 and calprotectin (S100A8/9). Interacts with GBP7 (via GB1/RHD3-type G domain). Interacts with CYBB; the interaction is enhanced in the presence of GBP7.

Its subcellular location is the cytoplasm. NCF2, NCF1, and a membrane bound cytochrome b558 are required for activation of the latent NADPH oxidase (necessary for superoxide production). Functionally, subunit of the phagocyte NADPH oxidase complex that mediates the transfer of electrons from cytosolic NADPH to O2 to produce the superoxide anion (O2(-)). In the activated complex, electrons are first transferred from NADPH to flavin adenine dinucleotide (FAD) and subsequently transferred via two heme molecules to molecular oxygen, producing superoxide through an outer-sphere reaction. Activation of the NADPH oxidase complex is initiated by the assembly of cytosolic subunits of the NADPH oxidase complex with the core NADPH oxidase complex to form a complex at the plasma membrane or phagosomal membrane. This activation process is initiated by phosphorylation dependent binding of the cytosolic NCF1/p47-phox subunit to the C-terminus of CYBA/p22-phox. This is Neutrophil cytosol factor 2 from Mus musculus (Mouse).